The following is a 998-amino-acid chain: MAQVAMSTLPVEDEESSESRMVVTFLMSALESMCKELAKSKAEVACIAVYETDVFVVGTERGRAFVNTRKDFQKDFVKYCVEEEEKAAEMHKMKSTTQANRMSVDAVEIETLRKTVEDYFCFCYGKALGKSTVVPVPYEKMLRDQSAVVVQGLPEGVAFKHPENYDLATLKWILENKAGISFIIKRPFLEPKKHVGGRVMVTDADRSILSPGGSCGPIKVKTEPTEDSGISLEMAAVTVKEESEDPDYYQYNIQAGPSETDDVDEKQPLSKPLQGSHHSSEGNEGTEMEVPAEDSTQHVPSETSEDPEVEVTIEDDDYSPPSKRPKANELPQPPVPEPANAGKRKVREFNFEKWNARITDLRKQVEELFERKYAQAIKAKGPVTIPYPLFQSHVEDLYVEGLPEGIPFRRPSTYGIPRLERILLAKERIRFVIKKHELLNSTREDLQLDKPASGVKEEWYARITKLRKMVDQLFCKKFAEALGSTEAKAVPYQKFEAHPNDLYVEGLPENIPFRSPSWYGIPRLEKIIQVGNRIKFVIKRPELLTHSTTEVTQPRTNTPVKEDWNVRITKLRKQVEEIFNLKFAQALGLTEAVKVPYPVFESNPEFLYVEGLPEGIPFRSPTWFGIPRLERIVRGSNKIKFVVKKPELVISYLPPGMASKINTKALQSPKRPRSPGSNSKVPEIEVTVEGPNNNNPQTSAVRTPTQTNGSNVPFKPRGREFSFEAWNAKITDLKQKVENLFNEKCGEALGLKQAVKVPFALFESFPEDFYVEGLPEGVPFRRPSTFGIPRLEKILRNKAKIKFIIKKPEMFETAIKESTSSKSPPRKINSSPNVNTTASGVEDLNIIQVTIPDDDNERLSKVEKARQLREQVNDLFSRKFGEAIGMGFPVKVPYRKITINPGCVVVDGMPPGVSFKAPSYLEISSMRRILDSAEFIKFTVIRPFPGLVINNQLVDQSESEGPVIQESAEPSQLEVPATEEIKETDGSSQIKQEPDPTW.

An N-acetylalanine modification is found at A2. A Phosphoserine modification is found at S19. Glycyl lysine isopeptide (Lys-Gly) (interchain with G-Cter in SUMO2) cross-links involve residues K35, K86, K92, and K94. S103 carries the phosphoserine modification. A GTF2I-like 1 repeat occupies 103 to 197 (SVDAVEIETL…FLEPKKHVGG (95 aa)). The residue at position 130 (K130) is an N6-acetyllysine; alternate. K130 is covalently cross-linked (Glycyl lysine isopeptide (Lys-Gly) (interchain with G-Cter in SUMO2); alternate). Residues K140 and K185 each participate in a glycyl lysine isopeptide (Lys-Gly) (interchain with G-Cter in SUMO2) cross-link. S207, S210, and S214 each carry phosphoserine. Residue K219 forms a Glycyl lysine isopeptide (Lys-Gly) (interchain with G-Cter in SUMO2) linkage. Residue K221 forms a Glycyl lysine isopeptide (Lys-Gly) (interchain with G-Cter in SUMO2); alternate linkage. K221 is covalently cross-linked (Glycyl lysine isopeptide (Lys-Gly) (interchain with G-Cter in SUMO1); alternate). The segment at 241 to 342 (EESEDPDYYQ…PPVPEPANAG (102 aa)) is disordered. Y248 is subject to Phosphotyrosine; by BTK. A phosphoserine mark is found at H278 and H298. The span at 303–318 (TSEDPEVEVTIEDDDY) shows a compositional bias: acidic residues. Positions 320–327 (PPSKRPKA) match the Nuclear localization signal motif. Glycyl lysine isopeptide (Lys-Gly) (interchain with G-Cter in SUMO2) cross-links involve residues K326 and K343. One copy of the GTF2I-like 2 repeat lies at 352–446 (EKWNARITDL…ELLNSTREDL (95 aa)). The residue at position 353 (K353) is an N6-acetyllysine; alternate. A Glycyl lysine isopeptide (Lys-Gly) (interchain with G-Cter in SUMO2); alternate cross-link involves residue K353. Residue K380 forms a Glycyl lysine isopeptide (Lys-Gly) (interchain with G-Cter in SUMO2) linkage. The residue at position 398 (Y398) is a Phosphotyrosine; by BTK. At S412 the chain carries Phosphoserine; by PKG/PRKG1. K435 participates in a covalent cross-link: Glycyl lysine isopeptide (Lys-Gly) (interchain with G-Cter in SUMO2). N6-acetyllysine; alternate is present on K450. Residue K450 forms a Glycyl lysine isopeptide (Lys-Gly) (interchain with G-Cter in SUMO2); alternate linkage. Glycyl lysine isopeptide (Lys-Gly) (interchain with G-Cter in SUMO2) cross-links involve residues K456, K488, and K494. A GTF2I-like 3 repeat occupies 457–551 (EEWYARITKL…ELLTHSTTEV (95 aa)). Y503 carries the post-translational modification Phosphotyrosine; by BTK. Position 517 is a phosphoserine (S517). Residue K526 forms a Glycyl lysine isopeptide (Lys-Gly) (interchain with G-Cter in SUMO2) linkage. 2 positions are modified to phosphothreonine: T556 and T558. Residue K561 forms a Glycyl lysine isopeptide (Lys-Gly) (interchain with G-Cter in SUMO2) linkage. A GTF2I-like 4 repeat occupies 562–656 (EDWNVRITKL…ELVISYLPPG (95 aa)). Residues K660 and K664 each participate in a glycyl lysine isopeptide (Lys-Gly) (interchain with G-Cter in SUMO2) cross-link. Disordered stretches follow at residues 662–681 (NTKA…NSKV) and 687–714 (TVEG…NVPF). Position 668 is a phosphoserine (S668). Residue K670 forms a Glycyl lysine isopeptide (Lys-Gly) (interchain with G-Cter in SUMO2) linkage. At S674 the chain carries Phosphoserine. K680 participates in a covalent cross-link: Glycyl lysine isopeptide (Lys-Gly) (interchain with G-Cter in SUMO2). Over residues 690 to 711 (GPNNNNPQTSAVRTPTQTNGSN) the composition is skewed to polar residues. K715 is modified (N6-acetyllysine; alternate). A Glycyl lysine isopeptide (Lys-Gly) (interchain with G-Cter in SUMO2); alternate cross-link involves residue K715. A Phosphoserine modification is found at S722. One copy of the GTF2I-like 5 repeat lies at 724-818 (EAWNAKITDL…EMFETAIKES (95 aa)). S784 carries the phosphoserine; by PKG/PRKG1 modification. K816 participates in a covalent cross-link: Glycyl lysine isopeptide (Lys-Gly) (interchain with G-Cter in SUMO2). Residues 816 to 836 (KESTSSKSPPRKINSSPNVNT) form a disordered region. Phosphoserine is present on S823. Residues K827, K861, K864, K879, and K891 each participate in a glycyl lysine isopeptide (Lys-Gly) (interchain with G-Cter in SUMO2) cross-link. Residues 859 to 953 (LSKVEKARQL…FPGLVINNQL (95 aa)) form a GTF2I-like 6 repeat. The disordered stretch occupies residues 958–998 (ESEGPVIQESAEPSQLEVPATEEIKETDGSSQIKQEPDPTW). K991 is covalently cross-linked (Glycyl lysine isopeptide (Lys-Gly) (interchain with G-Cter in SUMO2); alternate). Residue K991 forms a Glycyl lysine isopeptide (Lys-Gly) (interchain with G-Cter in SUMO1); alternate linkage.

It belongs to the TFII-I family. In terms of assembly, homodimer (Potential). Interacts with SRF and PHOX1. Binds a pyrimidine-rich initiator (Inr) and a recognition site (E-box) for upstream stimulatory factor 1 (USF1). Associates with the PH domain of Bruton's tyrosine kinase (BTK). May be a component of a BHC histone deacetylase complex that contains HDAC1, HDAC2, HMG20B/BRAF35, KDM1A, RCOR1/CoREST, PHF21A/BHC80, ZMYM2, ZNF217, ZMYM3, GSE1 and GTF2I. Interacts with BTK and ARID3A. Interacts with isoform beta of PRKG1. Interacts with GPR50 (C-TERMINAL DOMAIN). Post-translationally, transiently phosphorylated on tyrosine residues by BTK in response to B-cell receptor stimulation. Phosphorylation on Tyr-248 and Tyr-398, and perhaps, on Tyr-503 contributes to BTK-mediated transcriptional activation. In terms of processing, sumoylated. In terms of tissue distribution, ubiquitous. Isoform 1 is strongly expressed in fetal brain, weakly in adult brain, muscle, and lymphoblasts and is almost undetectable in other adult tissues, while the other isoforms are equally expressed in all adult tissues.

The protein localises to the cytoplasm. It localises to the nucleus. Interacts with the basal transcription machinery by coordinating the formation of a multiprotein complex at the C-FOS promoter, and linking specific signal responsive activator complexes. Promotes the formation of stable high-order complexes of SRF and PHOX1 and interacts cooperatively with PHOX1 to promote serum-inducible transcription of a reporter gene deriven by the C-FOS serum response element (SRE). Acts as a coregulator for USF1 by binding independently two promoter elements, a pyrimidine-rich initiator (Inr) and an upstream E-box. Required for the formation of functional ARID3A DNA-binding complexes and for activation of immunoglobulin heavy-chain transcription upon B-lymphocyte activation. This is General transcription factor II-I (GTF2I) from Homo sapiens (Human).